The primary structure comprises 557 residues: Urocanate hydratase (557 aa).

NAD(+) is bound by residues 53–54 (GG), Q131, 177–179 (GMG), D197, R202, 243–244 (NA), 264–268 (QTSAH), 274–275 (YL), and Y323. C411 is a catalytic residue. G493 contacts NAD(+).

Belongs to the urocanase family. NAD(+) is required as a cofactor.

The protein localises to the cytoplasm. The enzyme catalyses 4-imidazolone-5-propanoate = trans-urocanate + H2O. It functions in the pathway amino-acid degradation; L-histidine degradation into L-glutamate; N-formimidoyl-L-glutamate from L-histidine: step 2/3. In terms of biological role, catalyzes the conversion of urocanate to 4-imidazolone-5-propionate. This is Urocanate hydratase from Hahella chejuensis (strain KCTC 2396).